The sequence spans 589 residues: ATP-dependent ubiquitin transferase-like protein Cap2 (589 aa).

Cys-13 is covalently cross-linked (Glycyl cysteine dithioester (Cys-Gly) (interchain with G-Cter in DncV)). Lys-77 participates in a covalent cross-link: Glycyl lysine isopeptide (Lys-Gly) (interchain with G-Cter in DncV). The active-site For E2-like domain is the Cys-91. Glycyl lysine isopeptide (Lys-Gly) (interchain with G-Cter in DncV) cross-links involve residues Lys-305, Lys-387, and Lys-484. A Glycyl cysteine dithioester (Cys-Gly) (interchain with G-Cter in DncV) cross-link involves residue Cys-493. Active-site for E1-like domain residues include Cys-493, Cys-496, and Cys-513. Cys-513 participates in a covalent cross-link: Glycyl cysteine dithioester (Cys-Gly) (interchain with G-Cter in DncV). Residue Lys-523 forms a Glycyl lysine isopeptide (Lys-Gly) (interchain with G-Cter in DncV) linkage.

This sequence in the C-terminal section; belongs to the HesA/MoeB/ThiF family. As to quaternary structure, a Cap2 dimer is bound on either side by a DncV monomer. Post-translationally, conjugated to DncV via 5 different Lys residues and 3 Cys residues.

In terms of biological role, CD-NTase priming component of a CBASS antiviral system. CBASS (cyclic oligonucleotide-based antiphage signaling system) provides immunity against bacteriophages. The CD-NTase protein (DncV) synthesizes cyclic nucleotides in response to infection; these serve as specific second messenger signals. The signals activate a diverse range of effectors, leading to bacterial cell death and thus abortive phage infection. A type II-A(GA) CBASS system. Functionally, conjugates DncV to itself in vitro and to other cellular proteins in vivo; conjugation requires ATP. This primes DncV, upon phage infection CdnA activates and makes cyclic nucleotides. Protects E.coli against phage infection. When capV and dncV are introduced in E.coli MG1655 there is 1000-fold protection against phage P1; protection against other phage (T2, T4, T5, T6 and lambda-vir) requires the 2 subsequent genes. In another paper the capV-dncV-cap2-cap3 operon gives 10(4)-10(5)-fold protection against phages lambda, T2, T4 and T6, about 1000-fold protection against P1 and 10-fold protection against T5. In Escherichia coli (strain TW11681), this protein is ATP-dependent ubiquitin transferase-like protein Cap2.